A 1716-amino-acid chain; its full sequence is Histone-lysine N-methyltransferase SETD1A (1716 aa).

The tract at residues 60–89 (LQDPRCHVRSKARDFSLPVPKFKLDEFYIG) is interaction with WDR82. The RRM domain maps to 84–172 (DEFYIGQIPL…NIIHAQLDIK (89 aa)). Disordered regions lie at residues 194–367 (PTGG…SSYP), 380–499 (TSYP…AQHS), 516–670 (FSFL…PPPH), 849–869 (AKPF…EKMK), 911–1206 (KRKE…SRKV), 1230–1259 (EEVA…GTEV), and 1275–1297 (GLAT…AERP). Residues 222 to 231 (SDTAAYPAGT) show a composition bias toward low complexity. Positions 243 to 277 (CSQDTNFSSSRQDTPSSFGQFTPQSSQGTPYTSRG) are enriched in polar residues. 2 stretches are compositionally biased toward low complexity: residues 278 to 295 (STPY…TSTS) and 315 to 357 (STSS…SSAS). Positions 430–440 (SEAPPPEPPEP) are enriched in pro residues. Positions 441-461 (GGGGGGSGGGGGGGGGGGGGA) are enriched in gly residues. Ser477 bears the Phosphoserine mark. Residues 477–487 (SPARSGSPAPE) show a composition bias toward low complexity. Positions 488–499 (TTNESVPFAQHS) are enriched in polar residues. Residues Ser521 and Ser578 each carry the phosphoserine modification. Residues 581–591 (ANGQNQASPCS) are compositionally biased toward polar residues. Pro residues-rich tracts occupy residues 606-631 (SPPP…PPPY) and 638-670 (GYPP…PPPH). The span at 859 to 869 (QAKEEDKEKMK) shows a compositional bias: basic and acidic residues. Ser930 carries the phosphoserine modification. Composition is skewed to acidic residues over residues 991-1009 (KDED…EEAV) and 1018-1027 (ASDGEDEDSD). Positions 1028 to 1071 (SSSQCSLYADSDGENGSTSDSESGSSSSSSSSSSSSSSSSSSES) are enriched in low complexity. Ser1110 is subject to Phosphoserine. Over residues 1130 to 1150 (EEPPPSVPQPPAEPPAGPPDA) the composition is skewed to pro residues. The segment covering 1283-1292 (DDSEATETSD) has biased composition (acidic residues). An HCFC1-binding motif (HBM) motif is present at residues 1307–1311 (EHNYA). Disordered stretches follow at residues 1355 to 1427 (EEPK…FEPR) and 1480 to 1508 (TNLS…SEGY). A compositionally biased stretch (acidic residues) spans 1369 to 1383 (EGEEEEEDEEEESES). Basic residues predominate over residues 1399–1412 (RRRSLRSHTRRRRP). Positions 1413–1424 (PLPPPPPPPPSF) are enriched in pro residues. The segment at 1424 to 1459 (FEPRSEFEQMTILYDIWNSGLDLEDMSYLRLTYERL) is interaction with CFP1. Positions 1459–1546 (LLQQTSGADW…GTNRVLSERR (88 aa)) are interaction with ASH2L, RBBP5 and WDR5. The WDR5 interaction motif (WIN) motif lies at 1501 to 1506 (GSARSE). Positions 1546-1551 (RSEQRR) match the RxxxRR motif motif. In terms of domain architecture, SET spans 1577 to 1694 (KKLRFGRSRI…VDEEITYDYK (118 aa)). Tyr1693 provides a ligand contact to S-adenosyl-L-methionine. Residues 1700–1716 (NKIPCLCGTESCRGSLN) enclose the Post-SET domain.

This sequence belongs to the class V-like SAM-binding methyltransferase superfamily. In terms of assembly, component of the SET1A/COMPASS complex composed of the catalytic subunit SETD1A, WDR5, WDR82, RBBP5, ASH2L/ASH2, CXXC1/CFP1, HCFC1 and DPY30 homotrimer. Forms a core complex with the evolutionary conserved subcomplex WRAD composed of WDR5, RBBP5, ASH2L/ASH2 and DPY30 subunits; WRAD differentially stimulates the methyltransferase activity. Interacts with BOD1L1 (via COMPASS-Shg1 domain) at replication forks. Interacts with HCFC1. Interacts with ASH2/ASH2L. Interacts with CXXC1/CFP1. Interacts with RBBP5. Interacts (via N-terminal region) with WDR82; the interaction is direct. Interacts (via the RRM domain) with hyperphosphorylated C-terminal domain (CTD) of RNA polymerase II large subunit (POLR2A) only in the presence of WDR82. Binds specifically to CTD heptad repeats phosphorylated on 'Ser-5' of each heptad. Interacts with ZNF335. Interacts with SUPT6H. Interacts with NAP1L1. Interacts (via WIN motif) with WDR5.

The protein localises to the nucleus. Its subcellular location is the nucleus speckle. It localises to the chromosome. The protein resides in the cytoplasm. The enzyme catalyses L-lysyl(4)-[histone H3] + S-adenosyl-L-methionine = N(6)-methyl-L-lysyl(4)-[histone H3] + S-adenosyl-L-homocysteine + H(+). The catalysed reaction is N(6)-methyl-L-lysyl(4)-[histone H3] + S-adenosyl-L-methionine = N(6),N(6)-dimethyl-L-lysyl(4)-[histone H3] + S-adenosyl-L-homocysteine + H(+). It carries out the reaction N(6),N(6)-dimethyl-L-lysyl(4)-[histone H3] + S-adenosyl-L-methionine = N(6),N(6),N(6)-trimethyl-L-lysyl(4)-[histone H3] + S-adenosyl-L-homocysteine + H(+). Its function is as follows. Histone methyltransferase that catalyzes methyl group transfer from S-adenosyl-L-methionine to the epsilon-amino group of 'Lys-4' of histone H3 (H3K4) via a non-processive mechanism. Part of chromatin remodeling machinery, forms H3K4me1, H3K4me2 and H3K4me3 methylation marks at active chromatin sites where transcription and DNA repair take place. Responsible for H3K4me3 enriched promoters and transcriptional programming of inner mass stem cells and neuron progenitors during embryogenesis. Required for H3K4me1 mark at stalled replication forks. Mediates FANCD2-dependent nucleosome remodeling and RAD51 nucleofilaments stabilization at reversed forks, protecting them from nucleolytic degradation. Does not methylate 'Lys-4' of histone H3 if the neighboring 'Lys-9' residue is already methylated. Has RNA binding activity towards transcripts involved in RNA processing and the DNA damage response. The protein is Histone-lysine N-methyltransferase SETD1A (Setd1a) of Mus musculus (Mouse).